Consider the following 354-residue polypeptide: Putative succinyl-diaminopimelate desuccinylase DapE (354 aa).

Residue histidine 69 participates in Zn(2+) binding. The active site involves aspartate 71. Aspartate 95 contributes to the Zn(2+) binding site. Glutamate 125 (proton acceptor) is an active-site residue. The Zn(2+) site is built by glutamate 126, glutamate 154, and histidine 330.

Belongs to the peptidase M20A family. As to quaternary structure, homodimer. The cofactor is Zn(2+). It depends on Co(2+) as a cofactor.

It carries out the reaction N-succinyl-(2S,6S)-2,6-diaminopimelate + H2O = (2S,6S)-2,6-diaminopimelate + succinate. It participates in amino-acid biosynthesis; L-lysine biosynthesis via DAP pathway; LL-2,6-diaminopimelate from (S)-tetrahydrodipicolinate (succinylase route): step 3/3. Catalyzes the hydrolysis of N-succinyl-L,L-diaminopimelic acid (SDAP), forming succinate and LL-2,6-diaminoheptanedioate (DAP), an intermediate involved in the bacterial biosynthesis of lysine and meso-diaminopimelic acid. This is Putative succinyl-diaminopimelate desuccinylase DapE (dapE) from Mycobacterium tuberculosis (strain CDC 1551 / Oshkosh).